Reading from the N-terminus, the 661-residue chain is Fructose-1,6-bisphosphatase class 3 (661 aa).

It belongs to the FBPase class 3 family. It depends on Mn(2+) as a cofactor.

The catalysed reaction is beta-D-fructose 1,6-bisphosphate + H2O = beta-D-fructose 6-phosphate + phosphate. The protein operates within carbohydrate biosynthesis; gluconeogenesis. The chain is Fructose-1,6-bisphosphatase class 3 from Clostridioides difficile (strain 630) (Peptoclostridium difficile).